The primary structure comprises 235 residues: Leucyl/phenylalanyl-tRNA--protein transferase (235 aa).

Belongs to the L/F-transferase family.

Its subcellular location is the cytoplasm. The catalysed reaction is N-terminal L-lysyl-[protein] + L-leucyl-tRNA(Leu) = N-terminal L-leucyl-L-lysyl-[protein] + tRNA(Leu) + H(+). The enzyme catalyses N-terminal L-arginyl-[protein] + L-leucyl-tRNA(Leu) = N-terminal L-leucyl-L-arginyl-[protein] + tRNA(Leu) + H(+). It catalyses the reaction L-phenylalanyl-tRNA(Phe) + an N-terminal L-alpha-aminoacyl-[protein] = an N-terminal L-phenylalanyl-L-alpha-aminoacyl-[protein] + tRNA(Phe). Functions in the N-end rule pathway of protein degradation where it conjugates Leu, Phe and, less efficiently, Met from aminoacyl-tRNAs to the N-termini of proteins containing an N-terminal arginine or lysine. This is Leucyl/phenylalanyl-tRNA--protein transferase from Anaeromyxobacter sp. (strain Fw109-5).